A 133-amino-acid chain; its full sequence is Small ribosomal subunit protein mS23 (133 aa).

It belongs to the mitochondrion-specific ribosomal protein mS23 family. As to quaternary structure, component of the mitochondrial ribosome small subunit (28S) which comprises a 12S rRNA and about 30 distinct proteins.

Its subcellular location is the mitochondrion. The polypeptide is Small ribosomal subunit protein mS23 (mrps-23) (Caenorhabditis elegans).